A 614-amino-acid chain; its full sequence is ETS-related transcription factor Elf-1 (614 aa).

A phosphoserine mark is found at Ser110, Ser163, Ser167, and Ser168. Residues 159–199 (TYAHSPGPSSPEQPKRKKGRKTKPPRPDSPTTTPNISVKKK) form a disordered region. The segment covering 173–182 (KRKKGRKTKP) has biased composition (basic residues). Ser187 is modified (phosphoserine). Thr190 carries the post-translational modification Phosphothreonine. Residues 208–290 (IYLWEFLLAL…EGQRLVYQFK (83 aa)) constitute a DNA-binding region (ETS). A disordered region spans residues 303-371 (DPSCSIESSD…VQPSEALRTV (69 aa)). A compositionally biased stretch (low complexity) spans 310-335 (SSDPSLSSTATSSRNPASRSRASSSP). Position 430 is a phosphoserine (Ser430).

Belongs to the ETS family. In terms of assembly, binds to the underphosphorylated form of RB. May interact with other transcription factors in order to regulate specific genes. Interacts with RUNX1.

It is found in the nucleus. Functionally, transcription factor that activates the LYN and BLK promoters. The chain is ETS-related transcription factor Elf-1 (ELF1) from Bos taurus (Bovine).